The chain runs to 2742 residues: Polycystin-1-like protein 1 (2742 aa).

Topologically, residues 1–1602 (MFCLWIFSLA…LDQFLSVSRD (1602 aa)) are extracellular. Asn35, Asn133, Asn149, Asn220, and Asn267 each carry an N-linked (GlcNAc...) asparagine glycan. 2 PKD domains span residues 286 to 372 (AVRI…VKLN) and 370 to 454 (KLNR…PCQP). 7 N-linked (GlcNAc...) asparagine glycosylation sites follow: Asn383, Asn397, Asn486, Asn545, Asn693, Asn709, and Asn735. The 887-residue stretch at 452-1338 (CQPPPVKNLG…ITFFLPASLI (887 aa)) folds into the REJ domain. 2 disordered regions span residues 767–829 (SPSR…QSDP) and 846–908 (DLRG…RPSV). Residues 779–799 (SELTDSPVSSVTVGFSGSESF) are compositionally biased toward polar residues. Residues 880–893 (SFPSDSDSFSHSSS) show a composition bias toward low complexity. Asn1080, Asn1101, Asn1201, Asn1318, Asn1437, Asn1490, and Asn1568 each carry an N-linked (GlcNAc...) asparagine glycan. The GAIN-B domain maps to 1436–1587 (HNFSITQEHL…KVLQQQIQSS (152 aa)). 2 disulfides stabilise this stretch: Cys1541/Cys1569 and Cys1556/Cys1571. The GPS stretch occupies residues 1541–1587 (CLSWEDQQGSWTQNGCRAQTNDKTSAVNCSCHHLKPLKVLQQQIQSS). The chain crosses the membrane as a helical span at residues 1603–1623 (LTVVFVLLLCVSLNIPVLVWC). The Cytoplasmic portion of the chain corresponds to 1624 to 1812 (KKTDATSEEN…SPHLFTRAQR (189 aa)). The PLAT domain occupies 1648–1769 (HFYAVTVHTG…GDGQVERMLR (122 aa)). The chain crosses the membrane as a helical span at residues 1813–1833 (LCVCLLLFLGYACVNIIITHQ). Residues 1834 to 1851 (RDDQLPFDLGVIDVTSVS) are Extracellular-facing. Residues 1852-1872 (IATGLVSVVAVLPVAMVISFL) traverse the membrane as a helical segment. Topologically, residues 1873 to 2005 (FRVKSGRMTL…YRLASLLYHC (133 aa)) are cytoplasmic. A helical membrane pass occupies residues 2006 to 2026 (VAWTLCLLFCLSCLILSAVLG). Residues 2027–2040 (TRLNSGKILHWIHS) lie on the Extracellular side of the membrane. Residues 2041 to 2061 (LFVSLTFCFFVIHPATILVLA) traverse the membrane as a helical segment. Topologically, residues 2062-2151 (AVVSWRFKRS…KQAVIHKMLR (90 aa)) are cytoplasmic. A helical membrane pass occupies residues 2152 to 2172 (DLCLCGSMFFLMVCITYGSPV). The Extracellular segment spans residues 2173–2344 (DEHYPLNAAF…QSVRLYHSPS (172 aa)). The N-linked (GlcNAc...) asparagine glycan is linked to Asn2218. Residues 2345–2365 (MLDYTVMVWQLLFLLLSLVNL) traverse the membrane as a helical segment. Over 2366-2378 (YHQTSTAAQHGLM) the chain is Cytoplasmic. Residues 2379 to 2401 (GYWKTTSISVEVSLVIVSLVYYV) form a helical membrane-spanning segment. At 2402-2442 (HYVYHPTMVMEVAEQLRRNHREHVDVSTLANSEQFSRTLRG) the chain is on the extracellular side. The chain crosses the membrane as a helical span at residues 2443-2463 (IILFLLAVKCVTVVRLNRILA). Topologically, residues 2464–2467 (PSMP) are cytoplasmic. The chain crosses the membrane as a helical span at residues 2468–2488 (LLSLSSLLWPAISGLLLLSIF). Over 2489 to 2528 (SCMGRLLYIERTFHSIQTVLWHFWSLRKSRDLISLWRDFY) the chain is Extracellular. A helical membrane pass occupies residues 2529 to 2549 (YFGLLYASSAMLTTMVFAVMI). The Cytoplasmic segment spans residues 2550–2742 (RKAKRSPSTK…LVHHEQGTKN (193 aa)).

Belongs to the polycystin family. Heterodimer. Interacts with pkd2 to form a calcium channel. Interacts with pkd2l1 to form ciliary calcium channel. In terms of tissue distribution, expressed in Kupffer's vesicle, an organ equivalent to the node.

The protein localises to the cell projection. Its subcellular location is the cilium membrane. Its function is as follows. Component of a calcium-permeant ion channel formed by PKD1L2 and PKD1L1 in primary cilia, where it controls cilium calcium concentration, without affecting cytoplasmic calcium concentration, and regulates sonic hedgehog/SHH signaling and GLI2 transcription. The PKD1L1:PKD2L1 channel complex is mechanosensitive only at high pressures and is highly temperature sensitive. Also involved in left/right axis specification downstream of nodal flow by forming a complex with PKD2 in cilia to facilitate flow detection in left/right patterning. The sequence is that of Polycystin-1-like protein 1 from Oryzias latipes (Japanese rice fish).